Consider the following 370-residue polypeptide: Cap-specific mRNA (nucleoside-2'-O-)-methyltransferase 1 (370 aa).

One can recognise a RrmJ-type SAM-dependent 2'-O-MTase domain in the interval 87–294 (AFRNRAGHKL…ERYLVCIGFI (208 aa)). G130 and D207 together coordinate S-adenosyl-L-methionine. K248 serves as the catalytic Proton acceptor.

In terms of assembly, component of a complex composed of CBF5, GAR1, NHP2, MTR1, NOP10 and Tb11.01.8210.

Its subcellular location is the nucleus. The enzyme catalyses a 5'-end (N(7)-methyl 5'-triphosphoguanosine)-ribonucleoside in mRNA + S-adenosyl-L-methionine = a 5'-end (N(7)-methyl 5'-triphosphoguanosine)-(2'-O-methyl-ribonucleoside) in mRNA + S-adenosyl-L-homocysteine + H(+). Functionally, S-adenosyl-L-methionine-dependent methyltransferase that mediates RNA cap1 2'-O-ribose methylation to the 5'-cap structure of spliced leader and U1 small nuclear RNAs. Methylates the ribose of the first nucleotide of a m(7)GpppG-capped RNA to produce m(7)GpppNmp (cap1). Cap1 modification is linked to higher levels of translation. Recognizes a guanosine cap on RNA independent of its N(7) methylation status. The protein is Cap-specific mRNA (nucleoside-2'-O-)-methyltransferase 1 (MTR1) of Trypanosoma brucei brucei (strain 927/4 GUTat10.1).